Consider the following 432-residue polypeptide: Homogentisate 1,2-dioxygenase (432 aa).

The active-site Proton acceptor is histidine 286. Positions 329 and 335 each coordinate Fe cation. Tyrosine 344 and histidine 365 together coordinate homogentisate. Histidine 365 is a Fe cation binding site.

The protein belongs to the homogentisate dioxygenase family. In terms of assembly, hexamer; dimer of trimers. Fe cation serves as cofactor.

The catalysed reaction is homogentisate + O2 = 4-maleylacetoacetate + H(+). The protein operates within amino-acid degradation; L-phenylalanine degradation; acetoacetate and fumarate from L-phenylalanine: step 4/6. Functionally, involved in the catabolism of homogentisate (2,5-dihydroxyphenylacetate or 2,5-OH-PhAc), a central intermediate in the degradation of phenylalanine and tyrosine. Catalyzes the oxidative ring cleavage of the aromatic ring of homogentisate to yield maleylacetoacetate. This chain is Homogentisate 1,2-dioxygenase, found in Bordetella pertussis (strain Tohama I / ATCC BAA-589 / NCTC 13251).